We begin with the raw amino-acid sequence, 995 residues long: Translation initiation factor IF-2 (995 aa).

Positions 53 to 399 are disordered; that stretch reads NNAGSPAPAA…SGAPRGQGQV (347 aa). Composition is skewed to pro residues over residues 60-87 and 104-119; these read PAAP…PPGG and TPGP…PPQS. Positions 135–160 are enriched in low complexity; sequence AAAEARAAALKAEQEAAVKAAQAARQ. Over residues 161 to 171 the composition is skewed to basic and acidic residues; that stretch reads QQRENVRREPP. Pro residues predominate over residues 177 to 192; it reads RPGPRPGPGTMPPRPG. Residues 193–202 are compositionally biased toward low complexity; the sequence is SPAAGRSGAP. Pro residues-rich tracts occupy residues 203–213 and 242–264; these read APGPGPRPGGR and RPSP…PSPA. Residues 273-363 are compositionally biased toward gly residues; the sequence is RPGGPGSGRP…GAAGAFGRPG (91 aa). Residues 367-376 are compositionally biased toward basic residues; sequence TRGRKSKKQR. Residues 486–658 form the tr-type G domain; sequence SRPPVVTVMG…VLLTADASLE (173 aa). The interval 495–502 is G1; the sequence is GHVDHGKT. 495 to 502 is a binding site for GTP; the sequence is GHVDHGKT. The tract at residues 520–524 is G2; sequence GITQH. A G3 region spans residues 545–548; that stretch reads DTPG. Residues 545–549 and 599–602 contribute to the GTP site; these read DTPGH and NKID. Residues 599–602 form a G4 region; it reads NKID. Residues 635-637 form a G5 region; the sequence is AAK.

This sequence belongs to the TRAFAC class translation factor GTPase superfamily. Classic translation factor GTPase family. IF-2 subfamily.

The protein resides in the cytoplasm. Its function is as follows. One of the essential components for the initiation of protein synthesis. Protects formylmethionyl-tRNA from spontaneous hydrolysis and promotes its binding to the 30S ribosomal subunits. Also involved in the hydrolysis of GTP during the formation of the 70S ribosomal complex. This Salinispora arenicola (strain CNS-205) protein is Translation initiation factor IF-2.